Reading from the N-terminus, the 480-residue chain is UDP-N-acetylmuramoyl-L-alanyl-D-glutamate--2,6-diaminopimelate ligase (480 aa).

S21 contacts UDP-N-acetyl-alpha-D-muramoyl-L-alanyl-D-glutamate. 98–104 (GTNGKSS) provides a ligand contact to ATP. UDP-N-acetyl-alpha-D-muramoyl-L-alanyl-D-glutamate contacts are provided by residues 144–145 (TT), S171, Q177, and R179. An N6-carboxylysine modification is found at K211. Meso-2,6-diaminopimelate is bound by residues R372, 396 to 399 (DNPR), G446, and E450. The short motif at 396–399 (DNPR) is the Meso-diaminopimelate recognition motif element.

Belongs to the MurCDEF family. MurE subfamily. Requires Mg(2+) as cofactor. In terms of processing, carboxylation is probably crucial for Mg(2+) binding and, consequently, for the gamma-phosphate positioning of ATP.

The protein resides in the cytoplasm. The catalysed reaction is UDP-N-acetyl-alpha-D-muramoyl-L-alanyl-D-glutamate + meso-2,6-diaminopimelate + ATP = UDP-N-acetyl-alpha-D-muramoyl-L-alanyl-gamma-D-glutamyl-meso-2,6-diaminopimelate + ADP + phosphate + H(+). It participates in cell wall biogenesis; peptidoglycan biosynthesis. Catalyzes the addition of meso-diaminopimelic acid to the nucleotide precursor UDP-N-acetylmuramoyl-L-alanyl-D-glutamate (UMAG) in the biosynthesis of bacterial cell-wall peptidoglycan. This chain is UDP-N-acetylmuramoyl-L-alanyl-D-glutamate--2,6-diaminopimelate ligase, found in Rickettsia prowazekii (strain Madrid E).